A 660-amino-acid chain; its full sequence is DNA mismatch repair protein MutL (660 aa).

It belongs to the DNA mismatch repair MutL/HexB family.

Its function is as follows. This protein is involved in the repair of mismatches in DNA. It is required for dam-dependent methyl-directed DNA mismatch repair. May act as a 'molecular matchmaker', a protein that promotes the formation of a stable complex between two or more DNA-binding proteins in an ATP-dependent manner without itself being part of a final effector complex. The polypeptide is DNA mismatch repair protein MutL (Streptococcus equi subsp. zooepidemicus (strain MGCS10565)).